We begin with the raw amino-acid sequence, 295 residues long: ATP synthase gamma chain (295 aa).

Belongs to the ATPase gamma chain family. In terms of assembly, F-type ATPases have 2 components, CF(1) - the catalytic core - and CF(0) - the membrane proton channel. CF(1) has five subunits: alpha(3), beta(3), gamma(1), delta(1), epsilon(1). CF(0) has three main subunits: a, b and c.

It is found in the cell inner membrane. In terms of biological role, produces ATP from ADP in the presence of a proton gradient across the membrane. The gamma chain is believed to be important in regulating ATPase activity and the flow of protons through the CF(0) complex. The polypeptide is ATP synthase gamma chain (Campylobacter curvus (strain 525.92)).